We begin with the raw amino-acid sequence, 335 residues long: Holliday junction branch migration complex subunit RuvB (335 aa).

The segment at 2 to 184 is large ATPase domain (RuvB-L); sequence ADERIVSAEN…FGIVEHMAYY (183 aa). Residues Leu23, Arg24, Gly65, Lys68, Thr69, Thr70, 131–133, Arg174, Tyr184, and Arg221 contribute to the ATP site; that span reads EDF. Thr69 contacts Mg(2+). The small ATPAse domain (RuvB-S) stretch occupies residues 185–255; the sequence is TEADLMDIVQ…IADHALSQLQ (71 aa). A head domain (RuvB-H) region spans residues 258 to 335; the sequence is IRGLDGVDRK…AHLGMPYPEK (78 aa). Residues Arg313 and Arg318 each contribute to the DNA site.

It belongs to the RuvB family. Homohexamer. Forms an RuvA(8)-RuvB(12)-Holliday junction (HJ) complex. HJ DNA is sandwiched between 2 RuvA tetramers; dsDNA enters through RuvA and exits via RuvB. An RuvB hexamer assembles on each DNA strand where it exits the tetramer. Each RuvB hexamer is contacted by two RuvA subunits (via domain III) on 2 adjacent RuvB subunits; this complex drives branch migration. In the full resolvosome a probable DNA-RuvA(4)-RuvB(12)-RuvC(2) complex forms which resolves the HJ.

The protein resides in the cytoplasm. The catalysed reaction is ATP + H2O = ADP + phosphate + H(+). The RuvA-RuvB-RuvC complex processes Holliday junction (HJ) DNA during genetic recombination and DNA repair, while the RuvA-RuvB complex plays an important role in the rescue of blocked DNA replication forks via replication fork reversal (RFR). RuvA specifically binds to HJ cruciform DNA, conferring on it an open structure. The RuvB hexamer acts as an ATP-dependent pump, pulling dsDNA into and through the RuvAB complex. RuvB forms 2 homohexamers on either side of HJ DNA bound by 1 or 2 RuvA tetramers; 4 subunits per hexamer contact DNA at a time. Coordinated motions by a converter formed by DNA-disengaged RuvB subunits stimulates ATP hydrolysis and nucleotide exchange. Immobilization of the converter enables RuvB to convert the ATP-contained energy into a lever motion, pulling 2 nucleotides of DNA out of the RuvA tetramer per ATP hydrolyzed, thus driving DNA branch migration. The RuvB motors rotate together with the DNA substrate, which together with the progressing nucleotide cycle form the mechanistic basis for DNA recombination by continuous HJ branch migration. Branch migration allows RuvC to scan DNA until it finds its consensus sequence, where it cleaves and resolves cruciform DNA. This chain is Holliday junction branch migration complex subunit RuvB, found in Latilactobacillus sakei subsp. sakei (strain 23K) (Lactobacillus sakei subsp. sakei).